We begin with the raw amino-acid sequence, 210 residues long: Orotate phosphoribosyltransferase (210 aa).

5-phospho-alpha-D-ribose 1-diphosphate-binding positions include R97, K98, and 125 to 133; that span reads NDMVSSGKS. The orotate site is built by S129 and R157.

It belongs to the purine/pyrimidine phosphoribosyltransferase family. PyrE subfamily. In terms of assembly, homodimer. Requires Mg(2+) as cofactor.

It catalyses the reaction orotidine 5'-phosphate + diphosphate = orotate + 5-phospho-alpha-D-ribose 1-diphosphate. It functions in the pathway pyrimidine metabolism; UMP biosynthesis via de novo pathway; UMP from orotate: step 1/2. Functionally, catalyzes the transfer of a ribosyl phosphate group from 5-phosphoribose 1-diphosphate to orotate, leading to the formation of orotidine monophosphate (OMP). The protein is Orotate phosphoribosyltransferase of Chlamydia pneumoniae (Chlamydophila pneumoniae).